Consider the following 37-residue polypeptide: Large ribosomal subunit protein bL36 (37 aa).

This sequence belongs to the bacterial ribosomal protein bL36 family.

In Staphylococcus saprophyticus subsp. saprophyticus (strain ATCC 15305 / DSM 20229 / NCIMB 8711 / NCTC 7292 / S-41), this protein is Large ribosomal subunit protein bL36.